A 325-amino-acid chain; its full sequence is GMP reductase (325 aa).

C173 (thioimidate intermediate) is an active-site residue. 202 to 225 (IIADGGIRDHGDIAKSVRFGASMV) is an NADP(+) binding site.

It belongs to the IMPDH/GMPR family. GuaC type 2 subfamily.

The enzyme catalyses IMP + NH4(+) + NADP(+) = GMP + NADPH + 2 H(+). Catalyzes the irreversible NADPH-dependent deamination of GMP to IMP. It functions in the conversion of nucleobase, nucleoside and nucleotide derivatives of G to A nucleotides, and in maintaining the intracellular balance of A and G nucleotides. The protein is GMP reductase of Variovorax paradoxus (strain S110).